A 320-amino-acid polypeptide reads, in one-letter code: ADP-L-glycero-D-manno-heptose-6-epimerase (320 aa).

NADP(+) is bound by residues 10 to 11, 31 to 32, Lys-38, Lys-53, 75 to 79, and Asn-92; these read FI, DN, and LGACS. Catalysis depends on Tyr-139, which acts as the Proton acceptor. Lys-143 is a binding site for NADP(+). Position 168 (Asn-168) interacts with substrate. NADP(+) contacts are provided by Val-169 and Lys-177. Lys-177 serves as the catalytic Proton acceptor. Substrate contacts are provided by residues Gly-179, His-186, 200 to 203, Arg-213, and Tyr-277; that span reads FEGS.

The protein belongs to the NAD(P)-dependent epimerase/dehydratase family. HldD subfamily. Homopentamer. Requires NADP(+) as cofactor.

The enzyme catalyses ADP-D-glycero-beta-D-manno-heptose = ADP-L-glycero-beta-D-manno-heptose. It participates in nucleotide-sugar biosynthesis; ADP-L-glycero-beta-D-manno-heptose biosynthesis; ADP-L-glycero-beta-D-manno-heptose from D-glycero-beta-D-manno-heptose 7-phosphate: step 4/4. In terms of biological role, catalyzes the interconversion between ADP-D-glycero-beta-D-manno-heptose and ADP-L-glycero-beta-D-manno-heptose via an epimerization at carbon 6 of the heptose. The polypeptide is ADP-L-glycero-D-manno-heptose-6-epimerase (Alkalilimnicola ehrlichii (strain ATCC BAA-1101 / DSM 17681 / MLHE-1)).